Reading from the N-terminus, the 127-residue chain is Ribonuclease VapC6 (127 aa).

The PINc domain maps to 26-120; that stretch reads EPQRAEFCRS…ERHLPDIRVR (95 aa). Asp-86 serves as a coordination point for Mg(2+).

It belongs to the PINc/VapC protein family. Requires Mg(2+) as cofactor.

Toxic component of a type II toxin-antitoxin (TA) system. An RNase. The cognate antitoxin is VapB6. In Mycobacterium tuberculosis (strain CDC 1551 / Oshkosh), this protein is Ribonuclease VapC6.